A 208-amino-acid polypeptide reads, in one-letter code: MTEGVGLKGRQVVVATGNAGKVREIEQALAGLDWRLTGLGSVTLPEETGATYEENAALKACAAAVACGLPALADDSGLEVEALDGQPGVYSARFGNRPNDRERNLYLLEKLRGETNRRAKFVSVVILAYPDGHLETYRGEMTGQLLEGPRGENGFGYDPLFVPDGETRSLAEMTVEEKRAISHRGRALAALQAAHKDGLPPRQVSVID.

16 to 21 is a binding site for substrate; the sequence is TGNAGK. Residues glutamate 46 and aspartate 75 each coordinate Mg(2+). Aspartate 75 serves as the catalytic Proton acceptor. Residues serine 76, 155 to 158, lysine 178, and 183 to 184 each bind substrate; these read FGYD and HR.

This sequence belongs to the HAM1 NTPase family. In terms of assembly, homodimer. Mg(2+) is required as a cofactor.

It catalyses the reaction XTP + H2O = XMP + diphosphate + H(+). It carries out the reaction dITP + H2O = dIMP + diphosphate + H(+). The catalysed reaction is ITP + H2O = IMP + diphosphate + H(+). Pyrophosphatase that catalyzes the hydrolysis of nucleoside triphosphates to their monophosphate derivatives, with a high preference for the non-canonical purine nucleotides XTP (xanthosine triphosphate), dITP (deoxyinosine triphosphate) and ITP. Seems to function as a house-cleaning enzyme that removes non-canonical purine nucleotides from the nucleotide pool, thus preventing their incorporation into DNA/RNA and avoiding chromosomal lesions. The polypeptide is dITP/XTP pyrophosphatase (Deinococcus deserti (strain DSM 17065 / CIP 109153 / LMG 22923 / VCD115)).